Here is a 311-residue protein sequence, read N- to C-terminus: Malate dehydrogenase (311 aa).

Residues 7-13 (GAAGGIG) and D34 each bind NAD(+). Residues R81 and R87 each contribute to the substrate site. NAD(+) contacts are provided by residues N94 and 117–119 (ITN). Substrate contacts are provided by N119 and R153. Residue H177 is the Proton acceptor of the active site. M227 is an NAD(+) binding site.

The protein belongs to the LDH/MDH superfamily. MDH type 1 family. As to quaternary structure, homodimer.

The enzyme catalyses (S)-malate + NAD(+) = oxaloacetate + NADH + H(+). In terms of biological role, catalyzes the reversible oxidation of malate to oxaloacetate. This chain is Malate dehydrogenase, found in Aeromonas salmonicida (strain A449).